The sequence spans 196 residues: V-type proton ATPase subunit E (196 aa).

This sequence belongs to the V-ATPase E subunit family.

Produces ATP from ADP in the presence of a proton gradient across the membrane. The chain is V-type proton ATPase subunit E from Clostridium botulinum (strain Alaska E43 / Type E3).